Here is a 319-residue protein sequence, read N- to C-terminus: ATP-dependent 6-phosphofructokinase (319 aa).

Gly11 provides a ligand contact to ATP. 21-25 (RAVVR) contributes to the ADP binding site. Residues 72 to 73 (RC) and 102 to 105 (GDGS) contribute to the ATP site. Asp103 serves as a coordination point for Mg(2+). 125 to 127 (TID) provides a ligand contact to substrate. The active-site Proton acceptor is the Asp127. Arg154 lines the ADP pocket. Substrate-binding positions include Arg162 and 169-171 (MGR). ADP is bound by residues 185–187 (GAE), Lys211, and 213–215 (KMH). Substrate-binding positions include Glu222, Arg243, and 249–252 (HIQR).

The protein belongs to the phosphofructokinase type A (PFKA) family. ATP-dependent PFK group I subfamily. Prokaryotic clade 'B1' sub-subfamily. In terms of assembly, homotetramer. The cofactor is Mg(2+).

The protein resides in the cytoplasm. The catalysed reaction is beta-D-fructose 6-phosphate + ATP = beta-D-fructose 1,6-bisphosphate + ADP + H(+). It functions in the pathway carbohydrate degradation; glycolysis; D-glyceraldehyde 3-phosphate and glycerone phosphate from D-glucose: step 3/4. Allosterically activated by ADP and other diphosphonucleosides, and allosterically inhibited by phosphoenolpyruvate. Catalyzes the phosphorylation of D-fructose 6-phosphate to fructose 1,6-bisphosphate by ATP, the first committing step of glycolysis. The polypeptide is ATP-dependent 6-phosphofructokinase (Clostridium botulinum (strain 657 / Type Ba4)).